The sequence spans 587 residues: Protein IQ-DOMAIN 31 (587 aa).

Residues 57-80 (ETNTVDRSGGMLETQNVGPEEISD) form a disordered region. Phosphoserine is present on serine 79. 3 IQ domains span residues 112 to 140 (REIAATSVQAAFRGYLARRAFWALKGIIR), 141 to 163 (LQALIRGHLVRRQAVATLFSVMG), and 164 to 188 (IVRLQAFARGREIRKSDIGVQVYRK). Residues 149–159 (LVRRQAVATLF) are calmodulin-binding. Positions 176 to 183 (IRKSDIGV) match the Nuclear localization signal motif. The segment at 344–587 (NPVVESSIQP…AKTTPAERKR (244 aa)) is disordered. 2 stretches are compositionally biased toward basic and acidic residues: residues 357–373 (PRKEVEKPKLGVEKTRE) and 390–413 (CDEKKKQEISEQPEEEVHALEMEV). Residues 424–434 (ALDSSLVNQID) are compositionally biased toward polar residues. Composition is skewed to basic and acidic residues over residues 435 to 472 (SNEKAMVEEKPSMEKDTKEEKTPKPNNKENSAGKENQK) and 482 to 494 (KTEREESNGHHET). Composition is skewed to polar residues over residues 495–506 (SPSIPSYMQATK) and 544–561 (RITSHSPRTTRLANSGDK).

It belongs to the IQD family. Binds to multiple calmodulin (CaM) in the presence of Ca(2+) and CaM-like proteins.

The protein localises to the nucleus. It localises to the nucleus envelope. Its subcellular location is the cytoplasm. It is found in the cytoskeleton. The protein resides in the cell membrane. Its function is as follows. May be involved in cooperative interactions with calmodulins or calmodulin-like proteins. Recruits calmodulin proteins to microtubules, thus being a potential scaffold in cellular signaling and trafficking. May associate with nucleic acids and regulate gene expression at the transcriptional or post-transcriptional level. In Arabidopsis thaliana (Mouse-ear cress), this protein is Protein IQ-DOMAIN 31.